The chain runs to 780 residues: Ribonucleoside-diphosphate reductase large subunit (780 aa).

Substrate contacts are provided by residues Thr177, 192-193, Gly223, 393-397, and 595-599; these read SC, NLCAE, and PTVGS. Cysteines 193 and 409 form a disulfide. Catalysis depends on Asn393, which acts as the Proton acceptor. The active-site Cysteine radical intermediate is Cys395. Catalysis depends on Glu397, which acts as the Proton acceptor.

This sequence belongs to the ribonucleoside diphosphate reductase large chain family. In terms of assembly, heterotetramer composed of a homodimer of the large subunit (R1) and a homodimer of the small subunit (R2). Larger multisubunit protein complex are also active, composed of (R1)n(R2)n.

The enzyme catalyses a 2'-deoxyribonucleoside 5'-diphosphate + [thioredoxin]-disulfide + H2O = a ribonucleoside 5'-diphosphate + [thioredoxin]-dithiol. Its function is as follows. Ribonucleoside-diphosphate reductase holoenzyme provides the precursors necessary for viral DNA synthesis. Allows virus growth in non-dividing cells, as well as reactivation from latency in infected hosts. Catalyzes the biosynthesis of deoxyribonucleotides from the corresponding ribonucleotides. The sequence is that of Ribonucleoside-diphosphate reductase large subunit from Connochaetes taurinus (Blue wildebeest).